A 546-amino-acid polypeptide reads, in one-letter code: Chaperonin GroEL (546 aa).

Residues 30-33, K51, 87-91, G415, 479-481, and D495 each bind ATP; these read TLGP, DGTTT, and NAA.

This sequence belongs to the chaperonin (HSP60) family. In terms of assembly, forms a cylinder of 14 subunits composed of two heptameric rings stacked back-to-back. Interacts with the co-chaperonin GroES.

The protein localises to the cytoplasm. The enzyme catalyses ATP + H2O + a folded polypeptide = ADP + phosphate + an unfolded polypeptide.. Together with its co-chaperonin GroES, plays an essential role in assisting protein folding. The GroEL-GroES system forms a nano-cage that allows encapsulation of the non-native substrate proteins and provides a physical environment optimized to promote and accelerate protein folding. The chain is Chaperonin GroEL from Pseudomonas putida (strain ATCC 700007 / DSM 6899 / JCM 31910 / BCRC 17059 / LMG 24140 / F1).